The chain runs to 458 residues: Secretion-regulating guanine nucleotide exchange factor (458 aa).

RCC1 repeat units lie at residues 15–67, 68–119, 120–171, 172–230, 231–283, 284–351, and 352–402; these read AALF…VTDG, GDLF…LTEN, GQVL…ATAS, GIVF…LTDA, GEVY…QTET, GKMF…IIGG, and VCYS…LCQL. Residues 420 to 458 form a disordered region; that stretch reads DAIEDTESQKAMDKERNWKERQSETSTQSQSDWSRNGGL. Basic and acidic residues predominate over residues 426–442; it reads ESQKAMDKERNWKERQS. Ser427 bears the Phosphoserine mark.

Interacts with SEC5. The interaction occurs only in the presence of magnesium or manganese and is stimulated by dCTP or GTP.

It is found in the cytoplasm. Its subcellular location is the nucleus. Functionally, probable guanine nucleotide exchange factor (GEF), which may be involved in the secretion process. The polypeptide is Secretion-regulating guanine nucleotide exchange factor (SERGEF) (Homo sapiens (Human)).